The primary structure comprises 186 residues: NADH-ubiquinone oxidoreductase 17.8 kDa subunit, mitochondrial (186 aa).

A mitochondrion-targeting transit peptide spans 1 to 26 (MSSFRLGVSRVARQVRAPCVRNTRRY). The segment at 22–49 (NTRRYASDSHAPADHTHSAAGHGEHHHA) is disordered. Residues 26–49 (YASDSHAPADHTHSAAGHGEHHHA) are compositionally biased toward basic and acidic residues. A helical membrane pass occupies residues 58–78 (LGTAFYVIFGAIPAFGALYYF).

Complex I is composed of about 40 different subunits.

The protein resides in the mitochondrion inner membrane. It carries out the reaction a ubiquinone + NADH + 5 H(+)(in) = a ubiquinol + NAD(+) + 4 H(+)(out). Functionally, transfer of electrons from NADH to the respiratory chain. The immediate electron acceptor for the enzyme is believed to be ubiquinone. In Neurospora crassa (strain ATCC 24698 / 74-OR23-1A / CBS 708.71 / DSM 1257 / FGSC 987), this protein is NADH-ubiquinone oxidoreductase 17.8 kDa subunit, mitochondrial (nuo17.8).